We begin with the raw amino-acid sequence, 580 residues long: CTP synthase (580 aa).

Positions 304–559 constitute a Glutamine amidotransferase type-1 domain; it reads NIILVGKYVS…VAASSGCLDE (256 aa). Catalysis depends on for GATase activity residues Cys403, His532, and Glu534.

Belongs to the CTP synthase family.

It carries out the reaction UTP + L-glutamine + ATP + H2O = CTP + L-glutamate + ADP + phosphate + 2 H(+). It functions in the pathway pyrimidine metabolism; CTP biosynthesis via de novo pathway; CTP from UDP: step 2/2. In terms of biological role, catalyzes the ATP-dependent amination of UTP to CTP with either L-glutamine or ammonia as the source of nitrogen. The sequence is that of CTP synthase (URA7) from Gibberella zeae (strain ATCC MYA-4620 / CBS 123657 / FGSC 9075 / NRRL 31084 / PH-1) (Wheat head blight fungus).